A 341-amino-acid chain; its full sequence is Ketol-acid reductoisomerase (NADP(+)) (341 aa).

The KARI N-terminal Rossmann domain occupies 2 to 182 (AKIYYNDDAD…GGTRAGVIET (181 aa)). Residues 25 to 28 (YGSQ), Ser-51, Ser-53, and 83 to 86 (DQVQ) contribute to the NADP(+) site. His-108 is a catalytic residue. An NADP(+)-binding site is contributed by Gly-134. One can recognise a KARI C-terminal knotted domain in the interval 183 to 328 (TFTEETESDL…RKLRSLFAWE (146 aa)). Mg(2+) contacts are provided by Asp-191, Glu-195, Glu-227, and Glu-231. Residue Ser-252 participates in substrate binding.

Belongs to the ketol-acid reductoisomerase family. Mg(2+) serves as cofactor.

The enzyme catalyses (2R)-2,3-dihydroxy-3-methylbutanoate + NADP(+) = (2S)-2-acetolactate + NADPH + H(+). The catalysed reaction is (2R,3R)-2,3-dihydroxy-3-methylpentanoate + NADP(+) = (S)-2-ethyl-2-hydroxy-3-oxobutanoate + NADPH + H(+). The protein operates within amino-acid biosynthesis; L-isoleucine biosynthesis; L-isoleucine from 2-oxobutanoate: step 2/4. Its pathway is amino-acid biosynthesis; L-valine biosynthesis; L-valine from pyruvate: step 2/4. Functionally, involved in the biosynthesis of branched-chain amino acids (BCAA). Catalyzes an alkyl-migration followed by a ketol-acid reduction of (S)-2-acetolactate (S2AL) to yield (R)-2,3-dihydroxy-isovalerate. In the isomerase reaction, S2AL is rearranged via a Mg-dependent methyl migration to produce 3-hydroxy-3-methyl-2-ketobutyrate (HMKB). In the reductase reaction, this 2-ketoacid undergoes a metal-dependent reduction by NADPH to yield (R)-2,3-dihydroxy-isovalerate. This Kocuria rhizophila (strain ATCC 9341 / DSM 348 / NBRC 103217 / DC2201) protein is Ketol-acid reductoisomerase (NADP(+)).